The chain runs to 363 residues: Phosphoserine aminotransferase (363 aa).

An L-glutamate-binding site is contributed by arginine 42. Pyridoxal 5'-phosphate contacts are provided by residues 76-77 (GR), tryptophan 102, threonine 156, aspartate 175, and glutamine 198. Lysine 199 carries the N6-(pyridoxal phosphate)lysine modification. 240–241 (NT) contributes to the pyridoxal 5'-phosphate binding site.

This sequence belongs to the class-V pyridoxal-phosphate-dependent aminotransferase family. SerC subfamily. Homodimer. Pyridoxal 5'-phosphate is required as a cofactor.

The protein resides in the cytoplasm. It carries out the reaction O-phospho-L-serine + 2-oxoglutarate = 3-phosphooxypyruvate + L-glutamate. It catalyses the reaction 4-(phosphooxy)-L-threonine + 2-oxoglutarate = (R)-3-hydroxy-2-oxo-4-phosphooxybutanoate + L-glutamate. The protein operates within amino-acid biosynthesis; L-serine biosynthesis; L-serine from 3-phospho-D-glycerate: step 2/3. Its pathway is cofactor biosynthesis; pyridoxine 5'-phosphate biosynthesis; pyridoxine 5'-phosphate from D-erythrose 4-phosphate: step 3/5. Functionally, catalyzes the reversible conversion of 3-phosphohydroxypyruvate to phosphoserine and of 3-hydroxy-2-oxo-4-phosphonooxybutanoate to phosphohydroxythreonine. This chain is Phosphoserine aminotransferase, found in Shewanella baltica (strain OS195).